Reading from the N-terminus, the 160-residue chain is Cytochrome b6-f complex subunit 4 (160 aa).

A run of 3 helical transmembrane segments spans residues 36-56 (LLYMFPVVIFGSFACVIGLAV), 95-115 (LLGVLLMAAVPAGLLTVPFIE), and 131-151 (TVFLIGTFAAIWLGIGACLPI).

It belongs to the cytochrome b family. PetD subfamily. The 4 large subunits of the cytochrome b6-f complex are cytochrome b6, subunit IV (17 kDa polypeptide, petD), cytochrome f and the Rieske protein, while the 4 small subunits are petG, petL, petM and petN. The complex functions as a dimer.

It localises to the plastid. The protein localises to the chloroplast thylakoid membrane. Its function is as follows. Component of the cytochrome b6-f complex, which mediates electron transfer between photosystem II (PSII) and photosystem I (PSI), cyclic electron flow around PSI, and state transitions. The sequence is that of Cytochrome b6-f complex subunit 4 from Tupiella akineta (Green alga).